Consider the following 371-residue polypeptide: Nicotinate-nucleotide pyrophosphorylase [carboxylating], chloroplastic (371 aa).

A chloroplast-targeting transit peptide spans 1–48; it reads MPAAAAAAAPPNPNVLQLAPRLRGLVSFPSSYSSSSPFSNRLRLRLPR. Substrate is bound by residues Arg-162, 193–195, Arg-217, Lys-227, Glu-260, Asp-287, 319–321, and 340–342; these read TRK, SGN, and SGA.

Belongs to the NadC/ModD family.

The protein localises to the plastid. It is found in the chloroplast. The enzyme catalyses nicotinate beta-D-ribonucleotide + CO2 + diphosphate = quinolinate + 5-phospho-alpha-D-ribose 1-diphosphate + 2 H(+). Its pathway is cofactor biosynthesis; NAD(+) biosynthesis; nicotinate D-ribonucleotide from quinolinate: step 1/1. Involved in the catabolism of quinolinic acid (QA). This is Nicotinate-nucleotide pyrophosphorylase [carboxylating], chloroplastic from Oryza sativa subsp. japonica (Rice).